The primary structure comprises 129 residues: MYDNLKSLGITQPEDVDRYSLRQEANNDILKIYFRKDKGEFFAKSVKFKYPRQRKTVVADNAGHGYKEINEINPNLRYVIDELDQLCKRDQVEVDLKRKILDDLRHLESVVTNKIAEIEADLEKLTSGR.

This sequence belongs to the UPF0325 family.

The chain is UPF0325 protein YE3288 from Yersinia enterocolitica serotype O:8 / biotype 1B (strain NCTC 13174 / 8081).